We begin with the raw amino-acid sequence, 62 residues long: Small ribosomal subunit protein bS21 (62 aa).

Belongs to the bacterial ribosomal protein bS21 family.

In Mycoplasma genitalium (strain ATCC 33530 / DSM 19775 / NCTC 10195 / G37) (Mycoplasmoides genitalium), this protein is Small ribosomal subunit protein bS21 (rpsU).